An 875-amino-acid polypeptide reads, in one-letter code: Alanine--tRNA ligase (875 aa).

4 residues coordinate Zn(2+): His565, His569, Cys666, and His670.

The protein belongs to the class-II aminoacyl-tRNA synthetase family. Zn(2+) is required as a cofactor.

The protein localises to the cytoplasm. It carries out the reaction tRNA(Ala) + L-alanine + ATP = L-alanyl-tRNA(Ala) + AMP + diphosphate. In terms of biological role, catalyzes the attachment of alanine to tRNA(Ala) in a two-step reaction: alanine is first activated by ATP to form Ala-AMP and then transferred to the acceptor end of tRNA(Ala). Also edits incorrectly charged Ser-tRNA(Ala) and Gly-tRNA(Ala) via its editing domain. This chain is Alanine--tRNA ligase, found in Leptothrix cholodnii (strain ATCC 51168 / LMG 8142 / SP-6) (Leptothrix discophora (strain SP-6)).